Here is a 308-residue protein sequence, read N- to C-terminus: Apolipoprotein E (308 aa).

The first 18 residues, 1-18, serve as a signal peptide directing secretion; it reads MKFLWAALVVTLLAGCRA. 8 tandem repeats follow at residues 75–96, 97–118, 119–140, 141–162, 163–184, 185–206, 207–224, and 225–246. Residues 75–246 form an 8 X 22 AA approximate tandem repeats region; the sequence is LLIEETMKEV…RLDDMRDQME (172 aa). Positions 153 to 163 are LDL and other lipoprotein receptors binding; that stretch reads HLRKLRKRLLR. Residue 157–160 coordinates heparin; that stretch reads LRKR. The tract at residues 205–281 is lipid-binding and lipoprotein association; it reads AIPPSQQLRE…SWFEPLVQDM (77 aa). 220–227 contributes to the heparin binding site; it reads GQKVRGRL. The tract at residues 257 to 308 is homooligomerization; it reads SQVRLQAEAFQTRLKSWFEPLVQDMQRQWASLVEKVQSTLGISPSTKPSKTK. The specificity for association with VLDL stretch occupies residues 269-281; it reads RLKSWFEPLVQDM.

Belongs to the apolipoprotein A1/A4/E family. As to quaternary structure, homotetramer. May interact with ABCA1; functionally associated with ABCA1 in the biogenesis of HDLs. May interact with APP/A4 amyloid-beta peptide; the interaction is extremely stable in vitro but its physiological significance is unclear. May interact with MAPT. May interact with MAP2. In the cerebrospinal fluid, interacts with secreted SORL1. Interacts with PMEL; this allows the loading of PMEL luminal fragment on ILVs to induce fibril nucleation. APOE exists as multiple glycosylated and sialylated glycoforms within cells and in plasma. The extent of glycosylation and sialylation are tissue and context specific. In terms of processing, glycated in plasma VLDL. Post-translationally, phosphorylated by FAM20C in the extracellular medium.

Its subcellular location is the secreted. It localises to the extracellular space. It is found in the extracellular matrix. The protein resides in the extracellular vesicle. The protein localises to the endosome. Its subcellular location is the multivesicular body. Its function is as follows. APOE is an apolipoprotein, a protein associating with lipid particles, that mainly functions in lipoprotein-mediated lipid transport between organs via the plasma and interstitial fluids. APOE is a core component of plasma lipoproteins and is involved in their production, conversion and clearance. Apolipoproteins are amphipathic molecules that interact both with lipids of the lipoprotein particle core and the aqueous environment of the plasma. As such, APOE associates with chylomicrons, chylomicron remnants, very low density lipoproteins (VLDL) and intermediate density lipoproteins (IDL) but shows a preferential binding to high-density lipoproteins (HDL). It also binds a wide range of cellular receptors including the LDL receptor/LDLR and the very low-density lipoprotein receptor/VLDLR that mediate the cellular uptake of the APOE-containing lipoprotein particles. Finally, APOE also has a heparin-binding activity and binds heparan-sulfate proteoglycans on the surface of cells, a property that supports the capture and the receptor-mediated uptake of APOE-containing lipoproteins by cells. In Pteropus vampyrus (Large flying fox), this protein is Apolipoprotein E (APOE).